We begin with the raw amino-acid sequence, 120 residues long: Large ribosomal subunit protein bL17 (120 aa).

It belongs to the bacterial ribosomal protein bL17 family. As to quaternary structure, part of the 50S ribosomal subunit. Contacts protein L32.

This chain is Large ribosomal subunit protein bL17, found in Halalkalibacterium halodurans (strain ATCC BAA-125 / DSM 18197 / FERM 7344 / JCM 9153 / C-125) (Bacillus halodurans).